Consider the following 413-residue polypeptide: Dual-specificity RNA methyltransferase RlmN (413 aa).

Catalysis depends on Glu126, which acts as the Proton acceptor. A Radical SAM core domain is found at 132 to 381 (EEGRGTLCIS…IRTPRGRDIL (250 aa)). Residues Cys139 and Cys384 are joined by a disulfide bond. [4Fe-4S] cluster is bound by residues Cys146, Cys150, and Cys153. Residues 210-211 (GE), Ser242, 264-266 (SLH), and Asn341 contribute to the S-adenosyl-L-methionine site. Cys384 acts as the S-methylcysteine intermediate in catalysis.

This sequence belongs to the radical SAM superfamily. RlmN family. [4Fe-4S] cluster is required as a cofactor.

Its subcellular location is the cytoplasm. It catalyses the reaction adenosine(2503) in 23S rRNA + 2 reduced [2Fe-2S]-[ferredoxin] + 2 S-adenosyl-L-methionine = 2-methyladenosine(2503) in 23S rRNA + 5'-deoxyadenosine + L-methionine + 2 oxidized [2Fe-2S]-[ferredoxin] + S-adenosyl-L-homocysteine. It carries out the reaction adenosine(37) in tRNA + 2 reduced [2Fe-2S]-[ferredoxin] + 2 S-adenosyl-L-methionine = 2-methyladenosine(37) in tRNA + 5'-deoxyadenosine + L-methionine + 2 oxidized [2Fe-2S]-[ferredoxin] + S-adenosyl-L-homocysteine. Specifically methylates position 2 of adenine 2503 in 23S rRNA and position 2 of adenine 37 in tRNAs. m2A2503 modification seems to play a crucial role in the proofreading step occurring at the peptidyl transferase center and thus would serve to optimize ribosomal fidelity. In Sinorhizobium medicae (strain WSM419) (Ensifer medicae), this protein is Dual-specificity RNA methyltransferase RlmN.